We begin with the raw amino-acid sequence, 170 residues long: ATP synthase subunit b (170 aa).

A helical transmembrane segment spans residues 4–24 (ILLLGLALAPVALFASQGAVE).

Belongs to the ATPase B chain family. In terms of assembly, F-type ATPases have 2 components, F(1) - the catalytic core - and F(0) - the membrane proton channel. F(1) has five subunits: alpha(3), beta(3), gamma(1), delta(1), epsilon(1). F(0) has three main subunits: a(1), b(2) and c(10-14). The alpha and beta chains form an alternating ring which encloses part of the gamma chain. F(1) is attached to F(0) by a central stalk formed by the gamma and epsilon chains, while a peripheral stalk is formed by the delta and b chains.

Its subcellular location is the cell inner membrane. Its function is as follows. F(1)F(0) ATP synthase produces ATP from ADP in the presence of a proton or sodium gradient. F-type ATPases consist of two structural domains, F(1) containing the extramembraneous catalytic core and F(0) containing the membrane proton channel, linked together by a central stalk and a peripheral stalk. During catalysis, ATP synthesis in the catalytic domain of F(1) is coupled via a rotary mechanism of the central stalk subunits to proton translocation. In terms of biological role, component of the F(0) channel, it forms part of the peripheral stalk, linking F(1) to F(0). This is ATP synthase subunit b from Aliarcobacter butzleri (strain RM4018) (Arcobacter butzleri).